The chain runs to 497 residues: Casein kinase I isoform delta (497 aa).

Disordered regions lie at residues 1–58 (MATM…EEMN) and 86–109 (PIQQHQQPPLLQQAQPSQIPHPTQ). Residues 14-34 (WHNNTSTPMDTTEPATNSHNP) are compositionally biased toward polar residues. The segment covering 88 to 105 (QQHQQPPLLQQAQPSQIP) has biased composition (low complexity). The Protein kinase domain occupies 191–458 (FRLGRKIGSG…YLRNLFRTLF (268 aa)). Residues 197–205 (IGSGSFGDI) and Lys220 contribute to the ATP site. Residue Asp310 is the Proton acceptor of the active site.

It belongs to the protein kinase superfamily. CK1 Ser/Thr protein kinase family. Casein kinase I subfamily. Monomer. As to expression, expressed throughout larval development and into the adult stage in both hypodermal seam cells and the hermaphrodite specific neuron.

The protein localises to the cytoplasm. It localises to the nucleus. It is found in the chromosome. The protein resides in the centromere. Its subcellular location is the cell junction. The protein localises to the adherens junction. The enzyme catalyses L-seryl-[protein] + ATP = O-phospho-L-seryl-[protein] + ADP + H(+). It carries out the reaction L-threonyl-[protein] + ATP = O-phospho-L-threonyl-[protein] + ADP + H(+). Exhibits substrate-dependent heparin activation. Essential serine/threonine-protein kinase that regulates diverse cellular growth and survival processes including Wnt signaling, DNA repair and circadian rhythms. Casein kinases are operationally defined by their preferential utilization of acidic proteins. Positively regulates the expression of components of the heterochronic pathway, which regulate developmental timing, such as the transcriptional repressor lin-42 and microRNAs such as let-7. Negatively regulates cell cycle exit and cell fusion to prevent the premature differentiation of hypodermal seam cells into adult cells. Plays a role in regulating axon branching and subsequently, the maturation of the nervous system, most likely by preventing the premature termination of transcripts for proteins such as Ankyrin/unc-44, which are required for maintaining the nervous system. May phosphorylate ssup-72 to promote nervous system maturation. This is Casein kinase I isoform delta from Caenorhabditis elegans.